Consider the following 2572-residue polypeptide: Highly reducing polyketide synthase phiA (2572 aa).

The 428-residue stretch at 11–438 (IMPIAVVGMS…GANAHVIIES (428 aa)) folds into the Ketosynthase family 3 (KS3) domain. Active-site for beta-ketoacyl synthase activity residues include C186, H321, and H361. One can recognise a Malonyl-CoA:ACP transacylase (MAT) domain in the interval 591-917 (FVFTGQGAQW…HTALARKKDA (327 aa)). An N-terminal hotdog fold region spans residues 983–1120 (VDLLGVLERN…GLISVQTPQK (138 aa)). Residues 983–1307 (VDLLGVLERN…CATLERDGGG (325 aa)) form the PKS/mFAS DH domain. Catalysis depends on H1015, which acts as the Proton acceptor; for dehydratase activity. Residues 1150 to 1307 (RKEIDVSQFY…CATLERDGGG (158 aa)) are C-terminal hotdog fold. D1215 serves as the catalytic Proton donor; for dehydratase activity. Positions 1353–1654 (LERAAFYYLH…LSSSTNKTNY (302 aa)) are methyltransferase (CMeT) domain. Residues 1870 to 2182 (GLLDTLHFTE…TGGHMGKLVA (313 aa)) form the Enoyl reductase (ER) domain. Residues 2206 to 2383 (ASYLLVGGLG…ATTLDLGAIS (178 aa)) enclose the Ketoreductase (KR) domain. The region spanning 2484–2561 (AASEAICDAL…GLAAKIAKRS (78 aa)) is the Carrier domain. S2521 is subject to O-(pantetheine 4'-phosphoryl)serine.

Pantetheine 4'-phosphate is required as a cofactor.

It functions in the pathway secondary metabolite biosynthesis. Its function is as follows. Highly reducing polyketide synthase; part of the gene cluster that mediates the biosynthesis of the antihypercholesterolemic agents phomoidrides which are dimeric anhydrides. The pathway begins with the highly reducing polyketide synthase phiA that catalyzes the formation of a C12-fatty acyl-ACP, starting from one acetate and 5 malonate units. The hydrolase phiM is involved in the release of the C12-fatty acyl chain from phiA. The alkylcitrate synthase (ACS) phiJ and the alkylcitrate dehydratase (ACDH) phiI then give rise to decarboxylated monomeric anhydrides by coupling the C12-fatty acyl chain with oxalacetic acid. The cyclase phiC is responsible for the dimerization of the monomeric anhydrides which leads to the production of prephomoidride that contains the characteristic bicyclo[4.3.1]deca-1,6-diene system of phomoidrides. Iterative oxidation catalyzed by the alpha-ketoglutarate-dependent dioxygenase phiK produced then phomoidride A. Finally, the methyltransferase phiE converts phomoidride A to phomoidride B via an acetalization reaction. The phosphatidylethanolamine-binding protein phiB and phiN are not essential for dimerization and their functions have still to be determined. The protein is Highly reducing polyketide synthase phiA of Fungal sp. (strain ATCC 74256).